A 569-amino-acid chain; its full sequence is Urease subunit alpha (569 aa).

In terms of domain architecture, Urease spans 131-569 (GAIDSHIHFI…LPLAQRYLLL (439 aa)). Ni(2+) contacts are provided by His136, His138, and Lys219. At Lys219 the chain carries N6-carboxylysine. His221 provides a ligand contact to substrate. The Ni(2+) site is built by His248 and His274. The active-site Proton donor is the His322. Asp362 provides a ligand contact to Ni(2+).

Belongs to the metallo-dependent hydrolases superfamily. Urease alpha subunit family. As to quaternary structure, heterotrimer of UreA (gamma), UreB (beta) and UreC (alpha) subunits. Three heterotrimers associate to form the active enzyme. Ni cation is required as a cofactor. Post-translationally, carboxylation allows a single lysine to coordinate two nickel ions.

It is found in the cytoplasm. It carries out the reaction urea + 2 H2O + H(+) = hydrogencarbonate + 2 NH4(+). It participates in nitrogen metabolism; urea degradation; CO(2) and NH(3) from urea (urease route): step 1/1. The protein is Urease subunit alpha of Prochlorococcus marinus (strain NATL1A).